The following is a 359-amino-acid chain: Structure-specific endonuclease subunit SLX1 homolog (359 aa).

One can recognise a GIY-YIG domain in the interval 9 to 91; that stretch reads GLFACYCLVA…TYPTRSRYVN (83 aa). The segment at 192-238 adopts an SLX1-type zinc-finger fold; sequence CPICQDGVSPSNVQCMQCSARFCITCAGKLFTRRNTLIPCFGKCPIC. A disordered region spans residues 256-359; sequence VAGRKSVPHK…LPSDVISITD (104 aa). Residues 269-281 show a composition bias toward polar residues; that stretch reads VDGQSSLSQNSSY. Over residues 295-306 the composition is skewed to basic and acidic residues; sequence EPEKDDISRDES. Positions 316–326 are enriched in low complexity; the sequence is SSVALSDSSRS.

The protein belongs to the SLX1 family. Forms a heterodimer with a member of the SLX4 family. A divalent metal cation serves as cofactor.

It is found in the nucleus. In terms of biological role, catalytic subunit of a heterodimeric structure-specific endonuclease that resolves DNA secondary structures generated during DNA repair and recombination. Has endonuclease activity towards branched DNA substrates, introducing single-strand cuts in duplex DNA close to junctions with ss-DNA. This Giardia intestinalis (strain ATCC 50803 / WB clone C6) (Giardia lamblia) protein is Structure-specific endonuclease subunit SLX1 homolog.